The following is a 437-amino-acid chain: GTPase Obg (437 aa).

The Obg domain occupies 2-160 (SMFLDTAKIS…RQLELELKIL (159 aa)). An OBG-type G domain is found at 161-338 (ADVGLVGFPS…LLEATAELLA (178 aa)). GTP-binding positions include 167 to 174 (GFPSVGKS), 192 to 196 (FTTIV), 214 to 217 (DLPG), 284 to 287 (NKMD), and 319 to 321 (SSL). Residues serine 174 and threonine 194 each contribute to the Mg(2+) site. The OCT domain maps to 359-437 (GFAETEKDFE…IGKFEFEFVD (79 aa)).

Belongs to the TRAFAC class OBG-HflX-like GTPase superfamily. OBG GTPase family. Monomer. It depends on Mg(2+) as a cofactor.

The protein resides in the cytoplasm. Its function is as follows. An essential GTPase which binds GTP, GDP and possibly (p)ppGpp with moderate affinity, with high nucleotide exchange rates and a fairly low GTP hydrolysis rate. Plays a role in control of the cell cycle, stress response, ribosome biogenesis and in those bacteria that undergo differentiation, in morphogenesis control. In Streptococcus pyogenes serotype M1, this protein is GTPase Obg.